Reading from the N-terminus, the 448-residue chain is Phosphoglucosamine mutase (448 aa).

Catalysis depends on Ser-104, which acts as the Phosphoserine intermediate. Mg(2+) contacts are provided by Ser-104, Asp-245, Asp-247, and Asp-249. Phosphoserine is present on Ser-104.

The protein belongs to the phosphohexose mutase family. Mg(2+) serves as cofactor. In terms of processing, activated by phosphorylation.

It catalyses the reaction alpha-D-glucosamine 1-phosphate = D-glucosamine 6-phosphate. In terms of biological role, catalyzes the conversion of glucosamine-6-phosphate to glucosamine-1-phosphate. The polypeptide is Phosphoglucosamine mutase (Caulobacter vibrioides (strain ATCC 19089 / CIP 103742 / CB 15) (Caulobacter crescentus)).